Consider the following 342-residue polypeptide: Phosphate acyltransferase (342 aa).

Belongs to the PlsX family. As to quaternary structure, homodimer. Probably interacts with PlsY.

The protein localises to the cytoplasm. It catalyses the reaction a fatty acyl-[ACP] + phosphate = an acyl phosphate + holo-[ACP]. Its pathway is lipid metabolism; phospholipid metabolism. Its function is as follows. Catalyzes the reversible formation of acyl-phosphate (acyl-PO(4)) from acyl-[acyl-carrier-protein] (acyl-ACP). This enzyme utilizes acyl-ACP as fatty acyl donor, but not acyl-CoA. The sequence is that of Phosphate acyltransferase from Trichormus variabilis (strain ATCC 29413 / PCC 7937) (Anabaena variabilis).